The sequence spans 677 residues: WD repeat-containing protein 48 (677 aa).

8 WD repeats span residues 28 to 67 (YNRN…QDPY), 73 to 112 (HHTD…CMST), 115 to 154 (THKD…ALTA), 166 to 205 (GNKD…KLMK), 208 to 247 (GHTD…CIAT), 250 to 289 (VHDE…MRVL), 292 to 334 (EEKA…NFRA), and 358 to 397 (KGGT…KGED). The segment at 611–632 (SQATSSSANDKPGEQEKEEDVS) is disordered.

This sequence belongs to the WD repeat WDR48 family.

The protein localises to the nucleus. It localises to the cytoplasm. Its subcellular location is the lysosome. The protein resides in the late endosome. In terms of biological role, regulator of deubiquitinating complexes, which acts as a strong activator of usp1, usp12 and usp46. Enhances the usp1-mediated deubiquitination of fancd2; usp1 being almost inactive by itself. Activates deubiquitination by increasing the catalytic turnover without increasing the affinity of deubiquitinating enzymes for the substrate. Also activates deubiquitinating activity of complexes containing usp12. Together with rad51ap1, promotes DNA repair by stimulating rad51-mediated homologous recombination. Binds single-stranded DNA (ssDNA) and double-stranded DNA (dsDNA). DNA-binding is required both for usp1-mediated deubiquitination of fancd2 and stimulation of rad51-mediated homologous recombination: both wdr48/uaf1 and rad51ap1 have coordinated role in DNA-binding during these processes. Together with atad5 and by regulating usp1 activity, has a role in pcna-mediated translesion synthesis (TLS) by deubiquitinating monoubiquitinated pcna. Together with atad5, has a role in recruiting rad51 to stalled forks during replication stress. In Danio rerio (Zebrafish), this protein is WD repeat-containing protein 48 (wdr48).